A 67-amino-acid polypeptide reads, in one-letter code: Large ribosomal subunit protein bL35 (67 aa).

This sequence belongs to the bacterial ribosomal protein bL35 family.

The polypeptide is Large ribosomal subunit protein bL35 (Rhizobium etli (strain ATCC 51251 / DSM 11541 / JCM 21823 / NBRC 15573 / CFN 42)).